The following is a 470-amino-acid chain: Probable glycosyltransferase At3g07620 (470 aa).

At M1–K7 the chain is on the cytoplasmic side. A helical; Signal-anchor membrane pass occupies residues Y8–A28. At K29 to L470 the chain is on the lumenal side. N-linked (GlcNAc...) asparagine glycans are attached at residues N32, N73, N105, N236, N274, and N299.

It belongs to the glycosyltransferase 47 family.

It is found in the golgi apparatus membrane. Functionally, may be involved in cell wall biosynthesis. This is Probable glycosyltransferase At3g07620 from Arabidopsis thaliana (Mouse-ear cress).